Here is a 319-residue protein sequence, read N- to C-terminus: Extracellular phospholipase A1 (319 aa).

Residues 1 to 24 (MSMPLSFTSAVSPVAAIPTPRAAA) form the signal peptide.

The catalysed reaction is a 1,2-diacyl-sn-glycero-3-phosphocholine + H2O = a 2-acyl-sn-glycero-3-phosphocholine + a fatty acid + H(+). The chain is Extracellular phospholipase A1 (phlA) from Serratia liquefaciens.